The following is a 2096-amino-acid chain: HEAT repeat-containing protein 1 homolog (2096 aa).

Residues 2058 to 2096 (TVPFIAELLEDEHQRVEKNTRTGVQELETILGESVQKYL) form an HEAT repeat.

The protein belongs to the HEATR1/UTP10 family. Part of the small subunit (SSU) processome, composed of more than 70 proteins and the RNA chaperone small nucleolar RNA (snoRNA) U3. Interacts with MYC; the interaction is required for localization of MYC to the nucleolus.

It localises to the nucleus. The protein resides in the nucleolus. In terms of biological role, ribosome biogenesis factor; required for recruitment of Myc to nucleoli. Involved in nucleolar processing of pre-18S ribosomal RNA. Required for optimal pre-ribosomal RNA transcription by RNA polymerase I. Part of the small subunit (SSU) processome, first precursor of the small eukaryotic ribosomal subunit. During the assembly of the SSU processome in the nucleolus, many ribosome biogenesis factors, an RNA chaperone and ribosomal proteins associate with the nascent pre-rRNA and work in concert to generate RNA folding, modifications, rearrangements and cleavage as well as targeted degradation of pre-ribosomal RNA by the RNA exosome. Involved in neuronal-lineage cell proliferation during larval development. This chain is HEAT repeat-containing protein 1 homolog, found in Drosophila melanogaster (Fruit fly).